We begin with the raw amino-acid sequence, 1211 residues long: DNA-directed RNA polymerase subunit beta' (1211 aa).

Residues Cys60, Cys62, Cys75, and Cys78 each contribute to the Zn(2+) site. The Mg(2+) site is built by Asp450, Asp452, and Asp454. Cys819, Cys893, Cys900, and Cys903 together coordinate Zn(2+).

It belongs to the RNA polymerase beta' chain family. The RNAP catalytic core consists of 2 alpha, 1 beta, 1 beta' and 1 omega subunit. When a sigma factor is associated with the core the holoenzyme is formed, which can initiate transcription. Mg(2+) serves as cofactor. It depends on Zn(2+) as a cofactor.

The catalysed reaction is RNA(n) + a ribonucleoside 5'-triphosphate = RNA(n+1) + diphosphate. Its function is as follows. DNA-dependent RNA polymerase catalyzes the transcription of DNA into RNA using the four ribonucleoside triphosphates as substrates. The protein is DNA-directed RNA polymerase subunit beta' of Streptococcus equi subsp. zooepidemicus (strain H70).